The following is a 61-amino-acid chain: Small ribosomal subunit protein uS14 (61 aa).

Zn(2+) contacts are provided by Cys-24, Cys-27, Cys-40, and Cys-43.

The protein belongs to the universal ribosomal protein uS14 family. Zinc-binding uS14 subfamily. Part of the 30S ribosomal subunit. Contacts proteins S3 and S10. Requires Zn(2+) as cofactor.

Binds 16S rRNA, required for the assembly of 30S particles and may also be responsible for determining the conformation of the 16S rRNA at the A site. The chain is Small ribosomal subunit protein uS14 from Alkaliphilus metalliredigens (strain QYMF).